The following is a 339-amino-acid chain: Peroxidase 29 (339 aa).

An N-terminal signal peptide occupies residues 1-28 (MKPKSKVAESTAASCFLVMSLLCSCIIG). 4 cysteine pairs are disulfide-bonded: C47-C127, C80-C85, C133-C335, and C213-C242. H78 serves as the catalytic Proton acceptor. The Ca(2+) site is built by D79, V82, G84, D86, and S88. Position 176 (P176) interacts with substrate. Position 206 (H206) interacts with heme b. T207 is a Ca(2+) binding site. A glycan (N-linked (GlcNAc...) asparagine) is linked at N224. Ca(2+)-binding residues include D260, T262, and D267.

This sequence belongs to the peroxidase family. Classical plant (class III) peroxidase subfamily. It depends on heme b as a cofactor. Requires Ca(2+) as cofactor.

The protein localises to the secreted. The enzyme catalyses 2 a phenolic donor + H2O2 = 2 a phenolic radical donor + 2 H2O. Functionally, removal of H(2)O(2), oxidation of toxic reductants, biosynthesis and degradation of lignin, suberization, auxin catabolism, response to environmental stresses such as wounding, pathogen attack and oxidative stress. These functions might be dependent on each isozyme/isoform in each plant tissue. This Arabidopsis thaliana (Mouse-ear cress) protein is Peroxidase 29 (PER29).